The sequence spans 231 residues: Red fluorescent protein eqFP611 (231 aa).

The 2-iminomethyl-5-imidazolinone (Met-Gly) cross-link spans 63–65 (MYG). Tyr-64 is modified ((E)-2,3-didehydrotyrosine).

It belongs to the GFP family. As to quaternary structure, monomer. Contains a chromophore consisting of modified amino acid residues. The chromophore is formed by autocatalytic backbone condensation between Xaa-N and Gly-(N+2), oxidation of Tyr-(N+1) to didehydrotyrosine, and formation of a double bond to the alpha-amino nitrogen of residue Xaa-N. Maturation of the chromophore requires nothing other than molecular oxygen.

In terms of biological role, pigment protein. This chain is Red fluorescent protein eqFP611, found in Entacmaea quadricolor (Bubble-tip anemone).